A 218-amino-acid polypeptide reads, in one-letter code: Ras-related protein RABA1h (218 aa).

A GTP-binding site is contributed by 20-27 (GDSGVGKS). Positions 42–50 (SRSTIGVEF) match the Effector region motif. GTP is bound by residues 68-72 (DTAGQ), 126-129 (NKAD), and 156-157 (SA). 2 S-geranylgeranyl cysteine lipidation sites follow: cysteine 215 and cysteine 216.

It belongs to the small GTPase superfamily. Rab family.

It is found in the cell membrane. Its function is as follows. Intracellular vesicle trafficking and protein transport. This Arabidopsis thaliana (Mouse-ear cress) protein is Ras-related protein RABA1h (RABA1H).